We begin with the raw amino-acid sequence, 255 residues long: uncharacterized protein (255 aa).

Positions 1-23 (MKRLNKLVLGINLLFLVISITAG) are cleaved as a signal peptide. Cysteine 24 carries N-palmitoyl cysteine lipidation. A lipid anchor (S-diacylglycerol cysteine) is attached at cysteine 24.

Belongs to the staphylococcal tandem lipoprotein family.

The protein localises to the cell membrane. This is an uncharacterized protein from Staphylococcus aureus (strain MRSA252).